The chain runs to 1048 residues: Nonsense-mediated mRNA decay protein 5 (1048 aa).

The region spanning 24 to 104 is the Importin N-terminal domain; the sequence is AETHLKNASK…KDMLIKTMVS (81 aa). Ser977 bears the Phosphoserine mark.

As to quaternary structure, GTP-bound Ran dissociates the isolated NMD5/TFIIS complex.

The protein resides in the nucleus. It is found in the cytoplasm. Functionally, active in protein import into the nucleus. Its major import substrate is transcription elongation factor TFIIS. The protein is Nonsense-mediated mRNA decay protein 5 (NMD5) of Saccharomyces cerevisiae (strain ATCC 204508 / S288c) (Baker's yeast).